The primary structure comprises 221 residues: Interleukin-12 subunit alpha (221 aa).

The first 25 residues, M1–G25, serve as a signal peptide directing secretion. Intrachain disulfides connect C39–C112, C66–C198, and C87–C125. N-linked (GlcNAc...) asparagine glycans are attached at residues N41 and N95.

It belongs to the IL-6 superfamily. Heterodimer with IL12B; disulfide-linked. This heterodimer is known as interleukin IL-12. Heterodimer with EBI3/IL27B; not disulfide-linked. This heterodimer is known as interleukin IL-35. Interacts with NBR1; this interaction promotes IL-12 secretion.

The protein resides in the secreted. Functionally, heterodimerizes with IL12B to form the IL-12 cytokine or with EBI3/IL27B to form the IL-35 cytokine. IL-12 is primarily produced by professional antigen-presenting cells (APCs) such as B-cells and dendritic cells (DCs) as well as macrophages and granulocytes and regulates T-cell and natural killer-cell responses, induces the production of interferon-gamma (IFN-gamma), favors the differentiation of T-helper 1 (Th1) cells and is an important link between innate resistance and adaptive immunity. Mechanistically, exerts its biological effects through a receptor composed of IL12R1 and IL12R2 subunits. Binding to the receptor results in the rapid tyrosine phosphorylation of a number of cellular substrates including the JAK family kinases TYK2 and JAK2. In turn, recruited STAT4 gets phosphorylated and translocates to the nucleus where it regulates cytokine/growth factor responsive genes. As part of IL-35, plays essential roles in maintaining the immune homeostasis of the liver microenvironment and also functions as an immune-suppressive cytokine. Mediates biological events through unconventional receptors composed of IL12RB2 and gp130/IL6ST heterodimers or homodimers. Signaling requires the transcription factors STAT1 and STAT4, which form a unique heterodimer that binds to distinct DNA sites. In Cervus elaphus (Red deer), this protein is Interleukin-12 subunit alpha (IL12A).